Here is a 246-residue protein sequence, read N- to C-terminus: Virulence plasmid protein pGP6-D (246 aa).

It belongs to the UPF0137 (pGP6-D) family.

In Chlamydia muridarum (strain MoPn / Nigg), this protein is Virulence plasmid protein pGP6-D.